A 357-amino-acid chain; its full sequence is Alanine racemase (357 aa).

The Proton acceptor; specific for D-alanine role is filled by K35. K35 carries the post-translational modification N6-(pyridoxal phosphate)lysine. R128 is a substrate binding site. Residue Y254 is the Proton acceptor; specific for L-alanine of the active site. Residue M302 coordinates substrate.

This sequence belongs to the alanine racemase family. It depends on pyridoxal 5'-phosphate as a cofactor.

The catalysed reaction is L-alanine = D-alanine. It functions in the pathway amino-acid biosynthesis; D-alanine biosynthesis; D-alanine from L-alanine: step 1/1. Catalyzes the interconversion of L-alanine and D-alanine. May also act on other amino acids. The protein is Alanine racemase (alr) of Marinobacter nauticus (strain ATCC 700491 / DSM 11845 / VT8) (Marinobacter aquaeolei).